The primary structure comprises 236 residues: uncharacterized protein (236 aa).

The RPE1 insert domain maps to 117–160 (RYLSKQTDRNEFITTAESYIGISKHKSTNITYKLPLKEQFCNMS).

This is an uncharacterized protein from Rickettsia prowazekii (strain Madrid E).